Here is a 520-residue protein sequence, read N- to C-terminus: Signal peptide peptidase-like 2A (520 aa).

Positions 1–25 are cleaved as a signal peptide; sequence MGPQRRLSPAGAALLWGFLLQLTAA. Topologically, residues 26–172 are lumenal; that stretch reads QEAILHASGN…PSWPNFDYTM (147 aa). N-linked (GlcNAc...) asparagine glycans are attached at residues N58, N66, N74, N116, N126, and N149. The region spanning 63-151 is the PA domain; the sequence is SLMNLTSTPL…YKDFRDMNQT (89 aa). N155 carries N-linked (GlcNAc...) (complex) asparagine glycosylation. The helical transmembrane segment at 173–193 threads the bilayer; it reads VVIFVIAVFTVALGGYWSGLV. The Cytoplasmic segment spans residues 194-220; the sequence is ELENLKAVTTEDREMRKKKEEYLTFSP. A helical transmembrane segment spans residues 221-241; sequence LTVVIFVVICCVMMVLLYFFY. Residues 242–247 lie on the Lumenal side of the membrane; sequence KWLVYV. A helical membrane pass occupies residues 248 to 268; the sequence is MIAIFCIASAMSLYNCLAALI. At 269–285 the chain is on the cytoplasmic side; it reads HKIPYGQCTIACRGKNM. Residues 286-306 traverse the membrane as a helical segment; the sequence is EVRLIFLSGLCIAVAVVWAVF. Residues 307–311 are Lumenal-facing; that stretch reads RNEDR. Residues 312–332 form a helical membrane-spanning segment; that stretch reads WAWILQDILGIAFCLNLIKTL. The Cytoplasmic portion of the chain corresponds to 333 to 340; it reads KLPNFKSC. The helical transmembrane segment at 341–361 threads the bilayer; it reads VILLGLLLLYDVFFVFITPFI. D351 is an active-site residue. The Lumenal portion of the chain corresponds to 362–399; it reads TKNGESIMVELAAGPFGNNEKLPVVIRVPKLIYFSVMS. The chain crosses the membrane as a helical span at residues 400-420; the sequence is VCLMPVSILGFGDIIVPGLLI. Residue D412 is part of the active site. Topologically, residues 421–437 are cytoplasmic; that stretch reads AYCRRFDVQTGSSYIYY. The chain crosses the membrane as a helical span at residues 438-458; that stretch reads VSSTVAYAIGMILTFVVLVLM. The Lumenal portion of the chain corresponds to 459–460; the sequence is KK. Residues 461-481 form a helical membrane-spanning segment; the sequence is GQPALLYLVPCTLITASVVAW. A PAL motif is present at residues 463-465; that stretch reads PAL. Topologically, residues 482–520 are cytoplasmic; the sequence is RRKEMKKFWKGNSYQMMDHLDCATNEENPVISGEQIVQQ. The short motif at 495–498 is the YXXo lysosomal targeting motif element; it reads YQMM.

This sequence belongs to the peptidase A22B family. In terms of assembly, interacts with ITM2B. Post-translationally, glycosylated. In terms of tissue distribution, ubiquitous.

The protein resides in the late endosome membrane. It localises to the lysosome membrane. It is found in the membrane. Functionally, intramembrane-cleaving aspartic protease (I-CLiP) that cleaves type II membrane signal peptides in the hydrophobic plane of the membrane. Functions in FASLG, ITM2B and TNF processing. Catalyzes the intramembrane cleavage of the anchored fragment of shed TNF-alpha (TNF), which promotes the release of the intracellular domain (ICD) for signaling to the nucleus. Also responsible for the intramembrane cleavage of Fas antigen ligand FASLG, which promotes the release of the intracellular FasL domain (FasL ICD). Essential for degradation of the invariant chain CD74 that plays a central role in the function of antigen-presenting cells in the immune system. Plays a role in the regulation of innate and adaptive immunity. Catalyzes the intramembrane cleavage of the simian foamy virus envelope glycoprotein gp130 independently of prior ectodomain shedding by furin or furin-like proprotein convertase (PC)-mediated cleavage proteolysis. This Homo sapiens (Human) protein is Signal peptide peptidase-like 2A.